Here is a 107-residue protein sequence, read N- to C-terminus: Large ribosomal subunit protein uL24 (107 aa).

Belongs to the universal ribosomal protein uL24 family. In terms of assembly, part of the 50S ribosomal subunit.

Its function is as follows. One of two assembly initiator proteins, it binds directly to the 5'-end of the 23S rRNA, where it nucleates assembly of the 50S subunit. In terms of biological role, one of the proteins that surrounds the polypeptide exit tunnel on the outside of the subunit. The protein is Large ribosomal subunit protein uL24 of Thiobacillus denitrificans (strain ATCC 25259 / T1).